Here is a 631-residue protein sequence, read N- to C-terminus: ATP-dependent protease PrkA (631 aa).

Threonine 217 is subject to Phosphothreonine. Serine 219 is modified (phosphoserine).

It belongs to the PrkA family. Phosphorylated by PrkC on two sites, Thr-217 and Ser-219, with the threonine being the major site of modification.

The protein resides in the forespore. It is found in the spore coat. It catalyses the reaction Hydrolysis of proteins in presence of ATP.. Hydrolase activity is regulated by phosphorylation by the Ser/Thr kinase PrkC, probably allowing fine control of sporulation. Phosphorylation by PrkC does not prevent ATP fixation but it inhibits specifically PrkA protease activity and down-regulates the sporulation processes. Hydrolase activity is inhibited by a protease inhibitor, phenylmethylsulfonyl fluoride (PMSF). Potential kinase activity requires the presence of MgCl(2) and is inhibited in the presence of MnCl(2). Its function is as follows. ATP-dependent protease that regulates sporulation. Is able to bind and hydrolyze ATP. This ATP-dependent protease activity is necessary for efficient sporulation of B.subtilis. In vitro, can hydrolyze alpha-casein, an exogenous substrate of Lon proteases, in an ATP-dependent manner. PrkA also modulates sporulation by negatively regulating the transcriptional regulator Hpr/ScoC to induce the expression of sigK. The control of sporulation mediated via the Hpr/ScoC regulator is probably indirect. PrkA was originally thought to be a protein kinase, as it has been shown to phosphorylate in vitro an unidentified 60 kDa protein from B.subtilis crude extracts at a serine residue. However, Zhang et al. did not observe autophosphorylation or kinase activity for this protein, suggesting that it may have lost its kinase activity during evolution or may be a pseudokinase. The polypeptide is ATP-dependent protease PrkA (Bacillus subtilis (strain 168)).